The sequence spans 122 residues: Fluoride-specific ion channel FluC (122 aa).

4 consecutive transmembrane segments (helical) span residues 4–24 (LAVL…SIFI), 33–53 (LGTM…SIYL), 66–86 (LLIT…LEGI), and 95–115 (LKAF…VALG). Na(+) contacts are provided by Gly-73 and Thr-76.

Belongs to the fluoride channel Fluc/FEX (TC 1.A.43) family.

It is found in the cell inner membrane. The catalysed reaction is fluoride(in) = fluoride(out). With respect to regulation, na(+) is not transported, but it plays an essential structural role and its presence is essential for fluoride channel function. In terms of biological role, fluoride-specific ion channel. Important for reducing fluoride concentration in the cell, thus reducing its toxicity. This Hydrogenobaculum sp. (strain Y04AAS1) protein is Fluoride-specific ion channel FluC.